The sequence spans 100 residues: Replication restart protein PriB (100 aa).

Residues Met1–Ile100 enclose the SSB domain.

This sequence belongs to the PriB family. As to quaternary structure, homodimer. Interacts with PriA and DnaT. Component of the replication restart primosome. Primosome assembly occurs via a 'hand-off' mechanism. PriA binds to replication forks, subsequently PriB then DnaT bind; DnaT then displaces ssDNA to generate the helicase loading substrate.

Functionally, involved in the restart of stalled replication forks, which reloads the replicative helicase on sites other than the origin of replication; the PriA-PriB pathway is the major replication restart pathway. During primosome assembly it facilitates complex formation between PriA and DnaT on DNA; stabilizes PriA on DNA. Stimulates the DNA unwinding activity of PriA helicase. The sequence is that of Replication restart protein PriB from Vibrio cholerae serotype O1 (strain ATCC 39315 / El Tor Inaba N16961).